The following is a 390-amino-acid chain: MNALRHTISLVSLGTFQLVRRTRGPHARGFLLGTGLGLASFSAVTYAHSAEAVDPKVNGVQMNTSRFMAEPITDSKALLGDKENMRHRMEILIMEIQAEFCRALEAEENCGQKFKVDRWERPEGGGGITCVLQDGDVFEKAGVNISVVTGSLPPAAVQQMRARGKNLKEGASLPFFASGVSAVIHPRNPHVPTIHFNYRYFEVETAKGEKQWWFGGGTDLTPYYLCEKDASHFHQTLKSACDEHDPTYYPRFKKWCDDYFRIKHRNESRGIGGIFFDDIDSPNQEAAFNFVSSCARAVIPSYVPLVRKHKNREYGNNERQWQLLRRGRYVEFNLIYDRGTKFGLYTPGARYESILMSLPLHARWEYMHEPKSQSEEGKLMKVLKNPKDWV.

Residues 131–140 (VLQDGDVFEK) are important for dimerization. A substrate-binding site is contributed by S181. Residue H195 is the Proton donor of the active site. Residues 197–199 (NYR) and 348–353 (GARYES) each bind substrate. Positions 329 to 365 (YVEFNLIYDRGTKFGLYTPGARYESILMSLPLHARWE) are important for dimerization.

Belongs to the aerobic coproporphyrinogen-III oxidase family. In terms of assembly, homodimer.

It carries out the reaction coproporphyrinogen III + O2 + 2 H(+) = protoporphyrinogen IX + 2 CO2 + 2 H2O. It functions in the pathway porphyrin-containing compound metabolism; protoporphyrin-IX biosynthesis; protoporphyrinogen-IX from coproporphyrinogen-III (O2 route): step 1/1. Functionally, involved in the heme biosynthesis. Catalyzes the aerobic oxidative decarboxylation of propionate groups of rings A and B of coproporphyrinogen-III to yield the vinyl groups in protoporphyrinogen-IX. This Drosophila melanogaster (Fruit fly) protein is Oxygen-dependent coproporphyrinogen-III oxidase (Coprox).